Consider the following 166-residue polypeptide: Small ribosomal subunit protein uS5 (166 aa).

Residues 11 to 74 (LQEKLIAVNR…EKARRNMMNV (64 aa)) form the S5 DRBM domain.

This sequence belongs to the universal ribosomal protein uS5 family. As to quaternary structure, part of the 30S ribosomal subunit. Contacts proteins S4 and S8.

Functionally, with S4 and S12 plays an important role in translational accuracy. In terms of biological role, located at the back of the 30S subunit body where it stabilizes the conformation of the head with respect to the body. The polypeptide is Small ribosomal subunit protein uS5 (Buchnera aphidicola subsp. Acyrthosiphon kondoi (Acyrthosiphon kondoi symbiotic bacterium)).